Here is a 449-residue protein sequence, read N- to C-terminus: Delta(8)-fatty-acid desaturase 1 (449 aa).

In terms of domain architecture, Cytochrome b5 heme-binding spans 7 to 91 (KKYITNEDLK…IRDFQVSEVS (85 aa)). Positions 42 and 65 each coordinate heme. A run of 2 helical transmembrane segments spans residues 113 to 133 (VTLYTLAFVAAMFLGVLYGVL) and 138 to 158 (VFAHQIAAALLGLLWIQSAYI). Positions 160–164 (HDSGH) match the Histidine box-1 motif. Residues 173–195 (YNRFAQLLSGNCLTGISIAWWKW) traverse the membrane as a helical segment. A Histidine box-2 motif is present at residues 197–201 (HNAHH). Helical transmembrane passes span 255–275 (YYPVMCFGRINLFIQTFLLLF), 284–304 (ALNFAGILVFWTWFPLLVSCL), and 311–331 (FFFVFTSFTVTALQHIQFTLN). The Histidine box-3 motif lies at 374 to 378 (QLEHH).

It belongs to the fatty acid desaturase type 1 family. Fe cation serves as cofactor. As to expression, highly expressed in flowers. Expressed in roots, leaves, stems and siliques.

It is found in the endoplasmic reticulum membrane. It catalyses the reaction an N-acyl-(4R)-4-hydroxysphinganine + 2 Fe(II)-[cytochrome b5] + O2 + 2 H(+) = a (4R,8E)-4-hydroxysphingenine ceramide + 2 Fe(III)-[cytochrome b5] + 2 H2O. The enzyme catalyses an N-acyl-(4R)-4-hydroxysphinganine + 2 Fe(II)-[cytochrome b5] + O2 + 2 H(+) = a (4R,8Z)-4-hydroxysphing-8-enine ceramide + 2 Fe(III)-[cytochrome b5] + 2 H2O. Its function is as follows. Plays a major role as delta(8)-fatty-acid desaturase which introduces a double bond at the 8-position in the long-chain base (LCB) of ceramides with or without a hydroxy group at the 4-position. The enzyme produces both the 8E and 8Z isomers (in a 4:1 ratio). This structural modification contributes to the quantitative partitioning of ceramides between the two major sphingolipid classes, glucosylceramides and glycosylinositolphosphoryl ceramides. Sphingolipids are important membrane components involved in environmental stress responses, such as resistance to chilling, and act as cell signaling molecules. The protein is Delta(8)-fatty-acid desaturase 1 (SLD1) of Arabidopsis thaliana (Mouse-ear cress).